We begin with the raw amino-acid sequence, 140 residues long: Sperm protein associated with the nucleus on the X chromosome N3 (140 aa).

3 stretches are compositionally biased toward polar residues: residues 1–20 (MEQP…CKSN), 62–79 (INSN…SINP), and 131–140 (EGSSQDSGED). Positions 1–140 (MEQPTSSTNG…EGSSQDSGED (140 aa)) are disordered.

This sequence belongs to the SPAN-X family.

The polypeptide is Sperm protein associated with the nucleus on the X chromosome N3 (SPANXN3) (Pan troglodytes (Chimpanzee)).